A 420-amino-acid chain; its full sequence is Serine hydroxymethyltransferase (420 aa).

(6S)-5,6,7,8-tetrahydrofolate-binding positions include leucine 121 and 125–127; that span reads GHL. Position 230 is an N6-(pyridoxal phosphate)lysine (lysine 230). Residues glutamate 246 and 354–356 each bind (6S)-5,6,7,8-tetrahydrofolate; that span reads SPF.

It belongs to the SHMT family. As to quaternary structure, homodimer. It depends on pyridoxal 5'-phosphate as a cofactor.

The protein resides in the cytoplasm. It carries out the reaction (6R)-5,10-methylene-5,6,7,8-tetrahydrofolate + glycine + H2O = (6S)-5,6,7,8-tetrahydrofolate + L-serine. It participates in one-carbon metabolism; tetrahydrofolate interconversion. It functions in the pathway amino-acid biosynthesis; glycine biosynthesis; glycine from L-serine: step 1/1. In terms of biological role, catalyzes the reversible interconversion of serine and glycine with tetrahydrofolate (THF) serving as the one-carbon carrier. This reaction serves as the major source of one-carbon groups required for the biosynthesis of purines, thymidylate, methionine, and other important biomolecules. Also exhibits THF-independent aldolase activity toward beta-hydroxyamino acids, producing glycine and aldehydes, via a retro-aldol mechanism. This is Serine hydroxymethyltransferase from Rickettsia rickettsii (strain Iowa).